The sequence spans 413 residues: Type II methyltransferase M.NaeI (413 aa).

The SAM-dependent MTase C5-type domain occupies leucine 4 to glutamate 317. The active site involves cysteine 78.

This sequence belongs to the class I-like SAM-binding methyltransferase superfamily. C5-methyltransferase family.

The enzyme catalyses a 2'-deoxycytidine in DNA + S-adenosyl-L-methionine = a 5-methyl-2'-deoxycytidine in DNA + S-adenosyl-L-homocysteine + H(+). Its function is as follows. A methylase that recognizes the double-stranded sequence 5'-GCCGGC-3', methylates C-? on both strands, and protects the DNA from cleavage by the NaeI endonuclease. This Lentzea aerocolonigenes (Lechevalieria aerocolonigenes) protein is Type II methyltransferase M.NaeI.